The primary structure comprises 601 residues: Glutathione-regulated potassium-efflux system protein KefB (601 aa).

Transmembrane regions (helical) follow at residues 4 to 24 (SDLLTAGVMFLFAAVAAVPLA), 29 to 49 (IGAVLGYLLAGIAIGPWGLGF), 55 to 75 (EILHFSELGVVFLMFIIGLEL), 87 to 107 (IFGVGAAQVMLSAVVLAGLLM), 115 to 135 (AAVIGGIGLAMSSTAMALQLM), 152 to 172 (VLLFQDLAVIPALALVPLLAG), 177 to 197 (HFDWIKVGMKVLAFAGMLIGG), 207 to 227 (FIADSGVREVFTAATLLLVLG), 230 to 250 (LFMDALGLSMALGTFIAGVLL), 262 to 282 (AIDPFKGLLLGLFFISVGMSL), 284 to 304 (LGVLYTHLLWVAVSVIVLVAV), 324 to 344 (MQFAGVLSQGGEFAFVLFSTA), and 356 to 376 (SLLLVTVTLSMMTTPLLMKLV). Residues 400–519 (KPQVIVVGFG…AGVTQFSRET (120 aa)) form the RCK N-terminal domain.

This sequence belongs to the monovalent cation:proton antiporter 2 (CPA2) transporter (TC 2.A.37) family. KefB subfamily. Interacts with the regulatory subunit KefG.

Its subcellular location is the cell inner membrane. In terms of biological role, pore-forming subunit of a potassium efflux system that confers protection against electrophiles. Catalyzes K(+)/H(+) antiport. This is Glutathione-regulated potassium-efflux system protein KefB from Citrobacter koseri (strain ATCC BAA-895 / CDC 4225-83 / SGSC4696).